A 557-amino-acid polypeptide reads, in one-letter code: Predicted GPI-anchored protein 17 (557 aa).

Positions 1–19 are cleaved as a signal peptide; it reads MKFSTVFTAIFALGTAVSA. Asn62, Asn116, Asn284, and Asn309 each carry an N-linked (GlcNAc...) asparagine glycan. Residues 320 to 355 adopt a coiled-coil conformation; that stretch reads LRKREYNDAVEAALRDIQKREEGIDDVEIALRKMKR. 3 N-linked (GlcNAc...) asparagine glycosylation sites follow: Asn376, Asn471, and Asn520. A lipid anchor (GPI-anchor amidated asparagine) is attached at Asn533. A propeptide spans 534-557 (removed in mature form); that stretch reads AGSSYGPGFYSTIFAVFGLFAMMI.

Substrate for cleavage by KEX2 in vitro.

The protein resides in the cell membrane. In terms of biological role, predicted GPI-anchored protein which may have a role during host infection. The polypeptide is Predicted GPI-anchored protein 17 (PGA17) (Candida albicans (strain SC5314 / ATCC MYA-2876) (Yeast)).